The following is a 259-amino-acid chain: Glucosamine-6-phosphate deaminase (259 aa).

Catalysis depends on aspartate 66, which acts as the Proton acceptor; for enolization step. The active-site For ring-opening step is aspartate 135. Histidine 137 (proton acceptor; for ring-opening step) is an active-site residue. The active-site For ring-opening step is glutamate 142.

This sequence belongs to the glucosamine/galactosamine-6-phosphate isomerase family. NagB subfamily.

It catalyses the reaction alpha-D-glucosamine 6-phosphate + H2O = beta-D-fructose 6-phosphate + NH4(+). It participates in amino-sugar metabolism; N-acetylneuraminate degradation; D-fructose 6-phosphate from N-acetylneuraminate: step 5/5. Its function is as follows. Catalyzes the reversible isomerization-deamination of glucosamine 6-phosphate (GlcN6P) to form fructose 6-phosphate (Fru6P) and ammonium ion. This is Glucosamine-6-phosphate deaminase from Rhodococcus jostii (strain RHA1).